Reading from the N-terminus, the 237-residue chain is 2-C-methyl-D-erythritol 4-phosphate cytidylyltransferase (237 aa).

It belongs to the IspD/TarI cytidylyltransferase family. IspD subfamily.

The catalysed reaction is 2-C-methyl-D-erythritol 4-phosphate + CTP + H(+) = 4-CDP-2-C-methyl-D-erythritol + diphosphate. The protein operates within isoprenoid biosynthesis; isopentenyl diphosphate biosynthesis via DXP pathway; isopentenyl diphosphate from 1-deoxy-D-xylulose 5-phosphate: step 2/6. Its function is as follows. Catalyzes the formation of 4-diphosphocytidyl-2-C-methyl-D-erythritol from CTP and 2-C-methyl-D-erythritol 4-phosphate (MEP). The polypeptide is 2-C-methyl-D-erythritol 4-phosphate cytidylyltransferase (Acaryochloris marina (strain MBIC 11017)).